Here is a 360-residue protein sequence, read N- to C-terminus: DNA polymerase IV (360 aa).

The 182-residue stretch at 8-189 (IIHVDMDCFF…LPLEKIPGVG (182 aa)) folds into the UmuC domain. The Mg(2+) site is built by D12 and D107. E108 is an active-site residue.

It belongs to the DNA polymerase type-Y family. In terms of assembly, monomer. Mg(2+) is required as a cofactor.

It is found in the cytoplasm. It carries out the reaction DNA(n) + a 2'-deoxyribonucleoside 5'-triphosphate = DNA(n+1) + diphosphate. Functionally, poorly processive, error-prone DNA polymerase involved in untargeted mutagenesis. Copies undamaged DNA at stalled replication forks, which arise in vivo from mismatched or misaligned primer ends. These misaligned primers can be extended by PolIV. Exhibits no 3'-5' exonuclease (proofreading) activity. May be involved in translesional synthesis, in conjunction with the beta clamp from PolIII. The polypeptide is DNA polymerase IV (Vibrio cholerae serotype O1 (strain ATCC 39315 / El Tor Inaba N16961)).